The sequence spans 381 residues: Probable peptidoglycan glycosyltransferase FtsW (381 aa).

A run of 9 helical transmembrane segments spans residues 16 to 36 (LVLL…VYSA), 56 to 76 (LIFA…DYQL), 80 to 100 (WAVP…IPGI), 145 to 165 (LLSA…GLLL), 168 to 188 (PDMG…FAAG), 191 to 211 (LIFI…LVVH), 274 to 294 (VIGE…FFIL), 312 to 332 (FLAL…MAVV), and 343 to 363 (LPFL…VGIL).

It belongs to the SEDS family. FtsW subfamily.

It localises to the cell inner membrane. It catalyses the reaction [GlcNAc-(1-&gt;4)-Mur2Ac(oyl-L-Ala-gamma-D-Glu-L-Lys-D-Ala-D-Ala)](n)-di-trans,octa-cis-undecaprenyl diphosphate + beta-D-GlcNAc-(1-&gt;4)-Mur2Ac(oyl-L-Ala-gamma-D-Glu-L-Lys-D-Ala-D-Ala)-di-trans,octa-cis-undecaprenyl diphosphate = [GlcNAc-(1-&gt;4)-Mur2Ac(oyl-L-Ala-gamma-D-Glu-L-Lys-D-Ala-D-Ala)](n+1)-di-trans,octa-cis-undecaprenyl diphosphate + di-trans,octa-cis-undecaprenyl diphosphate + H(+). It functions in the pathway cell wall biogenesis; peptidoglycan biosynthesis. In terms of biological role, peptidoglycan polymerase that is essential for cell division. This chain is Probable peptidoglycan glycosyltransferase FtsW, found in Trichlorobacter lovleyi (strain ATCC BAA-1151 / DSM 17278 / SZ) (Geobacter lovleyi).